A 266-amino-acid polypeptide reads, in one-letter code: Small ribosomal subunit protein eS1 (266 aa).

Residues 236 to 266 form a disordered region; that stretch reads GAGTAAKATGDDTGAKVERADGYEPPIQESV. A compositionally biased stretch (basic and acidic residues) spans 244 to 257; that stretch reads TGDDTGAKVERADG.

The protein belongs to the eukaryotic ribosomal protein eS1 family. As to quaternary structure, component of the small ribosomal subunit. Mature ribosomes consist of a small (40S) and a large (60S) subunit. The 40S subunit contains about 33 different proteins and 1 molecule of RNA (18S). The 60S subunit contains about 49 different proteins and 3 molecules of RNA (28S, 5.8S and 5S). Part of the small subunit (SSU) processome, composed of more than 70 proteins and the RNA chaperone small nucleolar RNA (snoRNA) U3.

The protein resides in the cytoplasm. It is found in the nucleus. The protein localises to the nucleolus. Functionally, component of the small ribosomal subunit. The ribosome is a large ribonucleoprotein complex responsible for the synthesis of proteins in the cell. Part of the small subunit (SSU) processome, first precursor of the small eukaryotic ribosomal subunit. During the assembly of the SSU processome in the nucleolus, many ribosome biogenesis factors, an RNA chaperone and ribosomal proteins associate with the nascent pre-rRNA and work in concert to generate RNA folding, modifications, rearrangements and cleavage as well as targeted degradation of pre-ribosomal RNA by the RNA exosome. May play a role during erythropoiesis. This chain is Small ribosomal subunit protein eS1 (rps3a), found in Tetraodon nigroviridis (Spotted green pufferfish).